The primary structure comprises 354 residues: DNA integrity scanning protein DisA (354 aa).

The DAC domain maps to 6-144; that stretch reads GMKIKDTLKI…GDIKYVLRDS (139 aa). ATP contacts are provided by residues G73, L91, and 104-108; that span reads TRHRT.

This sequence belongs to the DisA family. Homooctamer. Mg(2+) is required as a cofactor.

The enzyme catalyses 2 ATP = 3',3'-c-di-AMP + 2 diphosphate. Functionally, participates in a DNA-damage check-point that is active prior to asymmetric division when DNA is damaged. DisA forms globular foci that rapidly scan along the chromosomes during sporulation, searching for lesions. When a lesion is present, DisA pauses at the lesion site. This triggers a cellular response that culminates in a temporary block in sporulation initiation. Its function is as follows. Also has diadenylate cyclase activity, catalyzing the condensation of 2 ATP molecules into cyclic di-AMP (c-di-AMP). c-di-AMP acts as a signaling molecule that couples DNA integrity with progression of sporulation. The rise in c-di-AMP level generated by DisA while scanning the chromosome, operates as a positive signal that advances sporulation; upon encountering a lesion, the DisA focus arrests at the damaged site and halts c-di-AMP synthesis. This is DNA integrity scanning protein DisA from Clostridium botulinum (strain Eklund 17B / Type B).